Reading from the N-terminus, the 439-residue chain is GTPase Obg (439 aa).

The Obg domain occupies 1–159; it reads MAFVDQAEIE…RKLKLELKVL (159 aa). Residues 160–336 form the OBG-type G domain; it reads ADVGLVGFPS…LMRLTADLLA (177 aa). GTP-binding positions include 166 to 173, 191 to 195, 213 to 216, 283 to 286, and 317 to 319; these read GFPSAGKS, FTTLS, DLPG, TKMD, and SAL. Positions 173 and 193 each coordinate Mg(2+). The region spanning 358–439 is the OCT domain; sequence DFKPEQHNFT…NSDFVFEFSD (82 aa).

It belongs to the TRAFAC class OBG-HflX-like GTPase superfamily. OBG GTPase family. In terms of assembly, monomer. Mg(2+) is required as a cofactor.

It localises to the cytoplasm. Functionally, an essential GTPase which binds GTP, GDP and possibly (p)ppGpp with moderate affinity, with high nucleotide exchange rates and a fairly low GTP hydrolysis rate. Plays a role in control of the cell cycle, stress response, ribosome biogenesis and in those bacteria that undergo differentiation, in morphogenesis control. This Leuconostoc citreum (strain KM20) protein is GTPase Obg.